Reading from the N-terminus, the 582-residue chain is Sorting nexin-4 (582 aa).

The span at 1-11 (MSSDDQFTSIQ) shows a compositional bias: polar residues. The interval 1-111 (MSSDDQFTSI…VNQEPSSDSQ (111 aa)) is disordered. Composition is skewed to basic and acidic residues over residues 12–27 (WDRDELGPNKETKVNK) and 35–54 (DEHHNNDNEDKDNDTTKSNE). Positions 57-70 (NIQEDDETKDDNEP) are enriched in acidic residues. Residues 116 to 249 (EINVVVTSPL…HLFVSDSADW (134 aa)) form the PX domain. The a 1,2-diacyl-sn-glycero-3-phospho-(1D-myo-inositol-3-phosphate) site is built by Arg171, Lys197, and Arg216. Coiled coils occupy residues 300–329 (SKHKRETNKEILEISDKLKKLYENLIKLDK) and 494–529 (SSVTESKVTKLQNRITELENEISVQSQLVLDLTNKI).

Belongs to the sorting nexin family.

Its subcellular location is the cytoplasm. It is found in the cytosol. It localises to the preautophagosomal structure membrane. The protein localises to the endosome membrane. Its function is as follows. Sorting nexin, involved in the separation or division of vacuoles throughout the entire life cycle of the cells. Involved in retrieval of late-Golgi SNAREs from post-Golgi endosomes to the trans-Golgi network, for cytoplasm to vacuole transport (Cvt), and autophagy of large cargos including mitophagy, pexophagy and glycophagy. The chain is Sorting nexin-4 (SNX4) from Debaryomyces hansenii (strain ATCC 36239 / CBS 767 / BCRC 21394 / JCM 1990 / NBRC 0083 / IGC 2968) (Yeast).